The chain runs to 424 residues: Serine--tRNA ligase (424 aa).

230 to 232 (TAE) serves as a coordination point for L-serine. Residue 261-263 (RSE) coordinates ATP. Position 284 (Glu-284) interacts with L-serine. ATP is bound at residue 348 to 351 (EISS). Ser-384 lines the L-serine pocket.

It belongs to the class-II aminoacyl-tRNA synthetase family. Type-1 seryl-tRNA synthetase subfamily. Homodimer. The tRNA molecule binds across the dimer.

It is found in the cytoplasm. It catalyses the reaction tRNA(Ser) + L-serine + ATP = L-seryl-tRNA(Ser) + AMP + diphosphate + H(+). The catalysed reaction is tRNA(Sec) + L-serine + ATP = L-seryl-tRNA(Sec) + AMP + diphosphate + H(+). The protein operates within aminoacyl-tRNA biosynthesis; selenocysteinyl-tRNA(Sec) biosynthesis; L-seryl-tRNA(Sec) from L-serine and tRNA(Sec): step 1/1. Its function is as follows. Catalyzes the attachment of serine to tRNA(Ser). Is also able to aminoacylate tRNA(Sec) with serine, to form the misacylated tRNA L-seryl-tRNA(Sec), which will be further converted into selenocysteinyl-tRNA(Sec). This Nitratidesulfovibrio vulgaris (strain ATCC 29579 / DSM 644 / CCUG 34227 / NCIMB 8303 / VKM B-1760 / Hildenborough) (Desulfovibrio vulgaris) protein is Serine--tRNA ligase.